The sequence spans 124 residues: Large-conductance mechanosensitive channel (124 aa).

The next 2 helical transmembrane spans lie at 15–35 (MDLA…NSLV) and 67–87 (GSFL…FFLI).

It belongs to the MscL family. Homopentamer.

It is found in the cell membrane. Its function is as follows. Channel that opens in response to stretch forces in the membrane lipid bilayer. May participate in the regulation of osmotic pressure changes within the cell. This Lactobacillus johnsonii (strain CNCM I-12250 / La1 / NCC 533) protein is Large-conductance mechanosensitive channel.